The sequence spans 300 residues: Ribosomal protein bS6--L-glutamate ligase (300 aa).

Positions 104–287 (MQLLARQGID…IASKMIRWIE (184 aa)) constitute an ATP-grasp domain. Residues Lys141, 178 to 179 (EY), Asp187, and 211 to 213 (RSN) contribute to the ATP site. Residues Asp248, Glu260, and Asn262 each contribute to the Mg(2+) site. Mn(2+)-binding residues include Asp248, Glu260, and Asn262.

The protein belongs to the RimK family. Mg(2+) is required as a cofactor. The cofactor is Mn(2+).

In terms of biological role, an L-glutamate ligase that catalyzes the ATP-dependent post-translational addition of glutamate residues to the C-terminus of ribosomal protein bS6 (RpsF). Is also able to catalyze the synthesis of poly-alpha-glutamate in vitro, via ATP hydrolysis from unprotected glutamate as substrate. The number of glutamate residues added to either RpsF or to poly-alpha-glutamate changes with pH. The protein is Ribosomal protein bS6--L-glutamate ligase of Escherichia coli O81 (strain ED1a).